A 356-amino-acid chain; its full sequence is Malate dehydrogenase, glyoxysomal (356 aa).

A glyoxysome-targeting transit peptide spans 1–36 (MQPIPDVNQRIARISAHLHPPKSQMEESSALRRANC). Residues 51 to 57 (GAAGGIG) and Asp77 each bind NAD(+). The substrate site is built by Arg124 and Arg130. NAD(+) contacts are provided by residues Asn137 and 160–162 (ISN). Residues Asn162 and Arg196 each contribute to the substrate site. His220 acts as the Proton acceptor in catalysis. Met271 contacts NAD(+).

The protein belongs to the LDH/MDH superfamily. MDH type 1 family. In terms of assembly, homodimer.

It is found in the glyoxysome. The enzyme catalyses (S)-malate + NAD(+) = oxaloacetate + NADH + H(+). In Citrullus lanatus (Watermelon), this protein is Malate dehydrogenase, glyoxysomal.